The sequence spans 366 residues: UDP-N-acetylenolpyruvoylglucosamine reductase (366 aa).

The 175-residue stretch at 29–203 folds into the FAD-binding PCMH-type domain; it reads VGPVARTLVT…LEVEFALDAS (175 aa). The active site involves Arg177. Ser258 (proton donor) is an active-site residue. Glu358 is an active-site residue.

Belongs to the MurB family. It depends on FAD as a cofactor.

The protein localises to the cytoplasm. The enzyme catalyses UDP-N-acetyl-alpha-D-muramate + NADP(+) = UDP-N-acetyl-3-O-(1-carboxyvinyl)-alpha-D-glucosamine + NADPH + H(+). It functions in the pathway cell wall biogenesis; peptidoglycan biosynthesis. In terms of biological role, cell wall formation. The polypeptide is UDP-N-acetylenolpyruvoylglucosamine reductase (Mycobacterium marinum (strain ATCC BAA-535 / M)).